The sequence spans 206 residues: Small ribosomal subunit protein uS4A (206 aa).

Positions 98-164 (MRLDNVVYRL…EKFKTFAENP (67 aa)) constitute an S4 RNA-binding domain.

Belongs to the universal ribosomal protein uS4 family. Part of the 30S ribosomal subunit. Contacts protein S5. The interaction surface between S4 and S5 is involved in control of translational fidelity.

Functionally, one of the primary rRNA binding proteins, it binds directly to 16S rRNA where it nucleates assembly of the body of the 30S subunit. In terms of biological role, with S5 and S12 plays an important role in translational accuracy. The protein is Small ribosomal subunit protein uS4A of Clostridium botulinum (strain ATCC 19397 / Type A).